A 140-amino-acid polypeptide reads, in one-letter code: Putative pre-16S rRNA nuclease (140 aa).

It belongs to the YqgF nuclease family.

Its subcellular location is the cytoplasm. In terms of biological role, could be a nuclease involved in processing of the 5'-end of pre-16S rRNA. This Aeromonas hydrophila protein is Putative pre-16S rRNA nuclease.